A 551-amino-acid polypeptide reads, in one-letter code: Membrane protein insertase YidC (551 aa).

The chain crosses the membrane as a helical span at residues 3 to 23 (ANHIRILLLVTIAIMLISLMG). The span at 30 to 43 (PSNSSQSQTTQTQQ) shows a compositional bias: low complexity. Residues 30–61 (PSNSSQSQTTQTQQDNSHYNSDTPATTNVSTS) are disordered. Residues 44-61 (DNSHYNSDTPATTNVSTS) show a composition bias toward polar residues. Transmembrane regions (helical) follow at residues 361-381 (LVGNWGLAIILVTCLIKLIFY), 431-451 (LSGCLPMLIQIPIFISLYWVL), and 504-524 (IMMFLPVIFTFLFASFPSGLV).

This sequence belongs to the OXA1/ALB3/YidC family. Type 1 subfamily. In terms of assembly, interacts with the Sec translocase complex via SecD. Specifically interacts with transmembrane segments of nascent integral membrane proteins during membrane integration.

Its subcellular location is the cell inner membrane. Its function is as follows. Required for the insertion and/or proper folding and/or complex formation of integral membrane proteins into the membrane. Involved in integration of membrane proteins that insert both dependently and independently of the Sec translocase complex, as well as at least some lipoproteins. Aids folding of multispanning membrane proteins. The polypeptide is Membrane protein insertase YidC (Francisella philomiragia subsp. philomiragia (strain ATCC 25017 / CCUG 19701 / FSC 153 / O#319-036)).